A 335-amino-acid polypeptide reads, in one-letter code: Probable E3 ubiquitin-protein ligase BAH1-like (335 aa).

Residues 1–163 (MKFGETFTEY…SSENGKNFKL (163 aa)) enclose the SPX domain. Residues 231 to 280 (CAICLETVFNPYALKCGHIFCNSCACSAASVLIFQGIKAAPRHSKCPICR) form an RING-type zinc finger.

It belongs to the RING-type zinc finger family.

It catalyses the reaction S-ubiquitinyl-[E2 ubiquitin-conjugating enzyme]-L-cysteine + [acceptor protein]-L-lysine = [E2 ubiquitin-conjugating enzyme]-L-cysteine + N(6)-ubiquitinyl-[acceptor protein]-L-lysine.. The protein operates within protein modification; protein ubiquitination. This chain is Probable E3 ubiquitin-protein ligase BAH1-like (RF178), found in Arabidopsis thaliana (Mouse-ear cress).